The primary structure comprises 610 residues: Preterminal protein (610 aa).

The tract at residues 288–379 (TLRSGTQTGL…ESFSDDVGLS (92 aa)) is disordered. The short motif at 328–337 (SLPIRRRRRR) is the Nuclear localization signal element. Positions 331–340 (IRRRRRRGTR) are enriched in basic residues. Residues 341 to 350 (RQVEREDSVR) show a composition bias toward basic and acidic residues. O-(5'-phospho-DNA)-serine is present on Ser-549.

It belongs to the adenoviridae terminal protein family. As to quaternary structure, heterodimer with the polymerase; this heterodimer binds to bp 9 to 18 of the genome. Interacts with host POU2F1; POU2F1 binds to the auxiliary sequences in the inverted terminal repeats and tethers the pTP-POL heterodimer to the origin DNA thereby participating in the assembly of the pre-initiation complex (POL-TP-DBP-NFIA-POU2F1). Preterminal protein is used to replicate viral genome, upon genomic encapsidation it is processed first into iTP and finally into TP by adenovirus protease.

Its subcellular location is the host nucleus matrix. Functionally, protein covalently bound to the viral DNA that acts as a primer for viral genomic replication by DNA strand displacement. Assembles on the viral origin of replication in an initiation complex with viral polymerase, DBP, host NFIA and host POU2F1/OCT1. During initiation, the polymerase covalently couples the first dCTP with Ser-580 of pTP. The terminal protein stimulates the template activity over 20 fold compared to protein-free templates. Neo-synthesized viral genomes are linked to two preterminal proteins, one for each 5' end. These new genomes are encapsidated in the nucleus, and during capsid maturation by viral protease, preterminal protein is first cleaved into intermediary (iTP), then into mature TP. May play a role in host nuclear matrix localization of genomic DNA. This Snake adenovirus serotype 1 (SnAdV-1) protein is Preterminal protein.